The sequence spans 245 residues: Gem-associated protein 2 (245 aa).

It belongs to the gemin-2 family. As to quaternary structure, component of the core survival motor neuron (SMN) complex composed of Smn, Gem2, Gem3, rig/Gem5 and one of 3 almost identical Gem4 paralogs encoded by Glos/Gem4a, Gem4b or Gem4c. Part of a minimal SMN complex composed of Smn and Gem2 only; this complex is active in UsnRNP assembly. The SMN complex associates with the entire set of spliceosomal snRNP Sm proteins, SmB, SmD1, SmD2, SmD3, SmE, SmF and SmG, and with the snRNP-specific proteins snRNP-U1-70K, U2A, snf/U1A and U5-116KD. As to expression, expressed in nurse cells and oocytes.

It is found in the cytoplasm. The protein resides in the U-body. Functionally, component of the survival motor neuron (SMN) complex that catalyzes the assembly of small nuclear ribonucleoproteins (snRNPs), the building blocks of the spliceosome, and thereby plays an important role in the splicing of cellular pre-mRNAs. Most spliceosomal snRNPs contain a common set of Sm proteins SNRPB, SNRPD1, SNRPD2, SNRPD3, SNRPE, SNRPF and SNRPG that assemble in a heptameric protein ring on the Sm site of the small nuclear RNA to form the core snRNP (Sm core). In the cytosol, the Sm proteins SNRPD1, SNRPD2, SNRPE, SNRPF and SNRPG (5Sm) are trapped in an inactive 6S pICln-Sm complex by the chaperone CLNS1A that controls the assembly of the core snRNP. To assemble core snRNPs, the SMN complex accepts the trapped 5Sm proteins from CLNS1A. Binding of snRNA inside 5Sm ultimately triggers eviction of the SMN complex, thereby allowing binding of SNRPD3 and SNRPB to complete assembly of the core snRNP. Within the SMN complex, GEMIN2 constrains the conformation of 5Sm, thereby promoting 5Sm binding to snRNA containing the snRNP code (a nonameric Sm site and a 3'-adjacent stem-loop), thus preventing progression of assembly until a cognate substrate is bound. Involved in adult motor function. In Drosophila melanogaster (Fruit fly), this protein is Gem-associated protein 2.